Consider the following 236-residue polypeptide: Phosphoribosylaminoimidazole-succinocarboxamide synthase (236 aa).

It belongs to the SAICAR synthetase family.

It catalyses the reaction 5-amino-1-(5-phospho-D-ribosyl)imidazole-4-carboxylate + L-aspartate + ATP = (2S)-2-[5-amino-1-(5-phospho-beta-D-ribosyl)imidazole-4-carboxamido]succinate + ADP + phosphate + 2 H(+). It functions in the pathway purine metabolism; IMP biosynthesis via de novo pathway; 5-amino-1-(5-phospho-D-ribosyl)imidazole-4-carboxamide from 5-amino-1-(5-phospho-D-ribosyl)imidazole-4-carboxylate: step 1/2. This chain is Phosphoribosylaminoimidazole-succinocarboxamide synthase, found in Campylobacter jejuni subsp. jejuni serotype O:6 (strain 81116 / NCTC 11828).